The primary structure comprises 657 residues: Endoplasmic reticulum mannosyl-oligosaccharide 1,2-alpha-mannosidase (657 aa).

The Cytoplasmic segment spans residues 1 to 49 (MYPPPPAPAPHRDFISVTLSLGESYDNSKSRRRRSCWRKWKQLSRLQRN). A helical membrane pass occupies residues 50–70 (VILFVLGFLILCGFLYSLQVS). Residues 71 to 657 (DQWKALSGSR…AHPLPIWSPA (587 aa)) are Lumenal-facing. Ser-101 bears the Phosphoserine mark. A disordered region spans residues 118–157 (HLRRGPPHLQIRPPNTVSKDGMQDDAKEREAALGKAQQEE). Residues 138-157 (GMQDDAKEREAALGKAQQEE) show a composition bias toward basic and acidic residues. The Proton donor role is filled by Glu-288. The active site involves Asp-421. Cys-485 and Cys-514 are oxidised to a cystine. The Proton donor role is filled by Glu-528. Glu-557 is an active-site residue. Thr-646 is a Ca(2+) binding site.

Belongs to the glycosyl hydrolase 47 family. Ca(2+) serves as cofactor.

It is found in the endoplasmic reticulum membrane. The catalysed reaction is N(4)-(alpha-D-Man-(1-&gt;2)-alpha-D-Man-(1-&gt;2)-alpha-D-Man-(1-&gt;3)-[alpha-D-Man-(1-&gt;2)-alpha-D-Man-(1-&gt;3)-[alpha-D-Man-(1-&gt;2)-alpha-D-Man-(1-&gt;6)]-alpha-D-Man-(1-&gt;6)]-beta-D-Man-(1-&gt;4)-beta-D-GlcNAc-(1-&gt;4)-beta-D-GlcNAc)-L-asparaginyl-[protein] (N-glucan mannose isomer 9A1,2,3B1,2,3) + 4 H2O = N(4)-(alpha-D-Man-(1-&gt;3)-[alpha-D-Man-(1-&gt;3)-[alpha-D-Man-(1-&gt;6)]-alpha-D-Man-(1-&gt;6)]-beta-D-Man-(1-&gt;4)-beta-D-GlcNAc-(1-&gt;4)-beta-D-GlcNAc)-L-asparaginyl-[protein] (N-glucan mannose isomer 5A1,2) + 4 beta-D-mannose. The enzyme catalyses N(4)-(alpha-D-Man-(1-&gt;2)-alpha-D-Man-(1-&gt;2)-alpha-D-Man-(1-&gt;3)-[alpha-D-Man-(1-&gt;3)-[alpha-D-Man-(1-&gt;2)-alpha-D-Man-(1-&gt;6)]-alpha-D-Man-(1-&gt;6)]-beta-D-Man-(1-&gt;4)-beta-D-GlcNAc-(1-&gt;4)-beta-D-GlcNAc)-L-asparaginyl-[protein] (N-glucan mannose isomer 8A1,2,3B1,3) + 3 H2O = N(4)-(alpha-D-Man-(1-&gt;3)-[alpha-D-Man-(1-&gt;3)-[alpha-D-Man-(1-&gt;6)]-alpha-D-Man-(1-&gt;6)]-beta-D-Man-(1-&gt;4)-beta-D-GlcNAc-(1-&gt;4)-beta-D-GlcNAc)-L-asparaginyl-[protein] (N-glucan mannose isomer 5A1,2) + 3 beta-D-mannose. It functions in the pathway protein modification; protein glycosylation. Functionally, involved in glycoprotein quality control targeting of misfolded glycoproteins for degradation. It primarily trims a single alpha-1,2-linked mannose residue from Man(9)GlcNAc(2) to produce Man(8)GlcNAc(2), but at high enzyme concentrations, as found in the ER quality control compartment (ERQC), it further trims the carbohydrates to Man(5-6)GlcNAc(2). The protein is Endoplasmic reticulum mannosyl-oligosaccharide 1,2-alpha-mannosidase (Man1b1) of Rattus norvegicus (Rat).